The following is a 141-amino-acid chain: MALTPEVEFEDIEVESEVIETSQTYKIDFENGRITNELITGLEAIRQFVYIALQTERYAYSIYSHNVGNELQDVLTDHETTDAYKKMEIPRLIEEALVYDDRISAVTDFEIEKQGDAFHVSFVVETDEGTLEIEEVIGEDV.

To B.subtilis YqbS.

The polypeptide is Phage-like element PBSX protein XkdS (xkdS) (Bacillus subtilis (strain 168)).